Consider the following 407-residue polypeptide: Probable beta-1,3-galactosyltransferase 4 (407 aa).

A helical; Signal-anchor for type II membrane protein transmembrane segment spans residues 23–39; the sequence is WTLFLCIGFFCAGILFS.

This sequence belongs to the glycosyltransferase 31 family. The cofactor is Mn(2+).

The protein localises to the golgi apparatus membrane. Its pathway is protein modification; protein glycosylation. In terms of biological role, beta-1,3-galactosyltransferase that transfers galactose from UDP-galactose to substrates with a terminal glycosyl residue. This is Probable beta-1,3-galactosyltransferase 4 (B3GALT4) from Arabidopsis thaliana (Mouse-ear cress).